We begin with the raw amino-acid sequence, 504 residues long: Probable cytosol aminopeptidase (504 aa).

K274 and D279 together coordinate Mn(2+). K286 is a catalytic residue. Mn(2+) contacts are provided by D297, D356, and E358. Residue R360 is part of the active site.

The protein belongs to the peptidase M17 family. Mn(2+) is required as a cofactor.

It is found in the cytoplasm. It carries out the reaction Release of an N-terminal amino acid, Xaa-|-Yaa-, in which Xaa is preferably Leu, but may be other amino acids including Pro although not Arg or Lys, and Yaa may be Pro. Amino acid amides and methyl esters are also readily hydrolyzed, but rates on arylamides are exceedingly low.. The enzyme catalyses Release of an N-terminal amino acid, preferentially leucine, but not glutamic or aspartic acids.. In terms of biological role, presumably involved in the processing and regular turnover of intracellular proteins. Catalyzes the removal of unsubstituted N-terminal amino acids from various peptides. This is Probable cytosol aminopeptidase from Blochmanniella floridana.